Consider the following 69-residue polypeptide: DNA gyrase inhibitor YacG (69 aa).

Residues Cys-7, Cys-10, Cys-26, and Cys-30 each contribute to the Zn(2+) site.

It belongs to the DNA gyrase inhibitor YacG family. As to quaternary structure, interacts with GyrB. It depends on Zn(2+) as a cofactor.

Its function is as follows. Inhibits all the catalytic activities of DNA gyrase by preventing its interaction with DNA. Acts by binding directly to the C-terminal domain of GyrB, which probably disrupts DNA binding by the gyrase. This chain is DNA gyrase inhibitor YacG, found in Shewanella baltica (strain OS223).